Consider the following 404-residue polypeptide: Zinc transporter 10 (404 aa).

Residues 1-22 (MESSSSSSYIPFIRQIAASVSA) form the signal peptide. Over 23-49 (ASCDAVVGGGGDKDEECRDEAAALRLK) the chain is Extracellular. The chain crosses the membrane as a helical span at residues 50-70 (MVAVAAILIAGAAGVAIPLVG). Topologically, residues 71-86 (RRRRGGGGGGGGGASS) are cytoplasmic. Residues 87 to 107 (GGLFVLAKAFAAGVILATGFV) traverse the membrane as a helical segment. Over 108–129 (HMLHDAEHALSNPCLPHSPWRR) the chain is Extracellular. The chain crosses the membrane as a helical span at residues 130-150 (FPFPGFVAMLAALATLVVDFV). Over 151-248 (GTHFYERKHR…GHEEGPSARH (98 aa)) the chain is Cytoplasmic. Residues 249–269 (VVVSQILELGIVSHSVIIGLS) form a helical membrane-spanning segment. Residues 270 to 280 (LGVSQSPCTIK) lie on the Extracellular side of the membrane. The helical transmembrane segment at 281–301 (PLVAALSFHQFFEGFALGGCI) threads the bilayer. The Cytoplasmic segment spans residues 302–311 (SEAQLKNFSA). The helical transmembrane segment at 312-332 (FLMAFFFAITTPAGITVGAAV) threads the bilayer. Residues 333–343 (ASFYNPNSPRA) are Extracellular-facing. A helical transmembrane segment spans residues 344–364 (LVVEGILDSMSAGILIYMALV). Residues 365-383 (DLIAADFLSRKMSCNPRLQ) lie on the Cytoplasmic side of the membrane. A helical membrane pass occupies residues 384–404 (VGSYIALFLGAMAMAALALWA).

Belongs to the ZIP transporter (TC 2.A.5) family.

It localises to the cell membrane. Zinc transporter that may be involved in zinc uptake from the rhizosphere. This is Zinc transporter 10 (ZIP10) from Oryza sativa subsp. japonica (Rice).